Here is a 1494-residue protein sequence, read N- to C-terminus: Ral GTPase-activating protein subunit beta (1494 aa).

2 disordered regions span residues 355–437 and 709–738; these read PRSD…APRR and ENNL…PDSE. S359 carries the phosphoserine modification. A phosphothreonine mark is found at T363 and T379. Composition is skewed to polar residues over residues 369–381, 392–428, and 711–735; these read SMPQ…TTPP, NKAT…TSSE, and NLKS…PTTP. 2 positions are modified to phosphoserine: S421 and S720. T734 is modified (phosphothreonine). Positions 1149-1392 constitute a Rap-GAP domain; that stretch reads IGYLDLLPCR…TTLEKEVPVI (244 aa). S1285 carries the phosphoserine modification. Residues 1312 to 1323 are compositionally biased toward polar residues; sequence NLNSSQRLSPSS. The disordered stretch occupies residues 1312–1335; that stretch reads NLNSSQRLSPSSRMRKLPQGRPVP.

Component of the heterodimeric RalGAP1 complex with RALGAPA1 and of the heterodimeric RalGAP2 complex with RALGAPA2. Heterodimerization is required for activity. Highly expressed in brain, mostly in amygdala.

Non-catalytic subunit of the heterodimeric RalGAP1 and RalGAP2 complexes which act as GTPase activators for the Ras-like small GTPases RALA and RALB. The polypeptide is Ral GTPase-activating protein subunit beta (RALGAPB) (Homo sapiens (Human)).